A 37-amino-acid chain; its full sequence is Large ribosomal subunit protein bL36 (37 aa).

Belongs to the bacterial ribosomal protein bL36 family.

This chain is Large ribosomal subunit protein bL36, found in Brevibacillus brevis (strain 47 / JCM 6285 / NBRC 100599).